Reading from the N-terminus, the 1669-residue chain is Collagen alpha-1(IV) chain (1669 aa).

The N-terminal stretch at 1 to 27 (MGPRLSVWLLLLPAALLLHEEHSRAAA) is a signal peptide. The propeptide at 28–172 (KGGCAGSGCG…LGHVPGMLLK (145 aa)) is N-terminal propeptide (7S domain). 3 disordered regions span residues 48-459 (KGER…EIGE), 504-1382 (GRDG…PKGQ), and 1404-1431 (PGQK…DGLP). N-linked (GlcNAc...) asparagine glycosylation is present at asparagine 126. The triple-helical region stretch occupies residues 173-1440 (GERGFPGIPG…PGSMGPPGTP (1268 aa)). Pro residues predominate over residues 196–214 (VGPPGFTGPPGPPGPPGPP). Residues proline 204, proline 207, and proline 210 each carry the 3-hydroxyproline modification. Low complexity predominate over residues 234 to 249 (QGVSGPPGVPGQAQVQ). Composition is skewed to basic and acidic residues over residues 250 to 263 (EKGD…KGQK) and 289 to 298 (PGKDGDKGEK). Pro residues-rich tracts occupy residues 367-376 (PGQPGPPGLP), 413-424 (PGPPGSPGPPGQ), and 436-448 (PGPP…PGIP). Positions 535 to 545 (FDLRLKGDKGD) are enriched in basic and acidic residues. The segment covering 586-595 (GPPGGVGFPG) has biased composition (gly residues). Residues proline 587 and proline 602 each carry the 3-hydroxyproline modification. Proline 603 is modified (4-hydroxyproline). Proline 605 carries the 3-hydroxyproline modification. Proline 606 is modified (4-hydroxyproline). A compositionally biased stretch (low complexity) spans 611-620 (AGPIGDKGQA). Residues 621–630 (GFPGGPGSPG) show a composition bias toward gly residues. Residues proline 623, proline 626, proline 629, and proline 632 each carry the 4-hydroxyproline modification. Proline 647 is subject to 3-hydroxyproline. Over residues 797-817 (GVPGIGPPGARGPPGGQGPPG) the composition is skewed to gly residues. Composition is skewed to low complexity over residues 856 to 875 (QSGL…PGFP) and 977 to 986 (PGKDGQAGQP). The segment covering 1011–1020 (GSVGGMGLPG) has biased composition (gly residues). A compositionally biased stretch (low complexity) spans 1086–1114 (SIGIPGMPGSPGLKGSPGSVGYPGSPGLP). Position 1214 is a 3-hydroxyproline (proline 1214). A compositionally biased stretch (pro residues) spans 1247–1258 (PGLPGPMGPPGL). The span at 1290–1299 (GMPGIGGSPG) shows a compositional bias: gly residues. Over residues 1368–1382 (PGLKGLQGLPGPKGQ) the composition is skewed to low complexity. Proline 1424 carries the 3-hydroxyproline modification. Positions 1445 to 1669 (GFLVTRHSQT…SRCQVCMRRT (225 aa)) constitute a Collagen IV NC1 domain. Cystine bridges form between cysteine 1460/cysteine 1551, cysteine 1493/cysteine 1548, cysteine 1505/cysteine 1511, cysteine 1570/cysteine 1665, cysteine 1604/cysteine 1662, and cysteine 1616/cysteine 1622. Methionine 1533 participates in a covalent cross-link: S-Lysyl-methionine sulfilimine (Met-Lys) (interchain with K-1651). Lysine 1651 participates in a covalent cross-link: S-Lysyl-methionine sulfilimine (Lys-Met) (interchain with M-1533).

The protein belongs to the type IV collagen family. As to quaternary structure, there are six type IV collagen isoforms, alpha 1(IV)-alpha 6(IV), each of which can form a triple helix structure with 2 other chains to generate type IV collagen network. Interacts with EFEMP2. Post-translationally, lysines at the third position of the tripeptide repeating unit (G-X-Y) are hydroxylated. The modified lysines can be O-glycosylated. In terms of processing, contains 4-hydroxyproline. Prolines at the third position of the tripeptide repeating unit (G-X-Y) are hydroxylated in some or all of the chains. Contains 3-hydroxyproline. This modification occurs on the first proline residue in the sequence motif Gly-Pro-Hyp, where Hyp is 4-hydroxyproline. Post-translationally, type IV collagens contain numerous cysteine residues which are involved in inter- and intramolecular disulfide bonding. 12 of these, located in the NC1 domain, are conserved in all known type IV collagens. In terms of processing, the trimeric structure of the NC1 domains is stabilized by covalent bonds (sulfilimine cross-links) between Lys and Met residues. These cross-links are important for the mechanical stability of the basement membrane. Sulfilimine cross-link is catalyzed by PXDN. Proteolytic processing produces the C-terminal NC1 peptide, arresten. As to expression, highly expressed in placenta.

The protein resides in the secreted. The protein localises to the extracellular space. Its subcellular location is the extracellular matrix. It is found in the basement membrane. Type IV collagen is the major structural component of glomerular basement membranes (GBM), forming a 'chicken-wire' meshwork together with laminins, proteoglycans and entactin/nidogen. Functionally, arresten, comprising the C-terminal NC1 domain, inhibits angiogenesis and tumor formation. The C-terminal half is found to possess the anti-angiogenic activity. Specifically inhibits endothelial cell proliferation, migration and tube formation. The chain is Collagen alpha-1(IV) chain from Homo sapiens (Human).